Consider the following 815-residue polypeptide: Translation initiation factor IF-2 (815 aa).

Basic and acidic residues predominate over residues valine 153–lysine 176. Residues valine 153–glutamate 219 are disordered. A compositionally biased stretch (basic residues) spans lysine 191 to arginine 209. The tr-type G domain maps to alanine 315–glutamate 482. The G1 stretch occupies residues glycine 324 to threonine 331. A GTP-binding site is contributed by glycine 324 to threonine 331. Residues glycine 349–histidine 353 form a G2 region. A G3 region spans residues aspartate 370–glycine 373. GTP contacts are provided by residues aspartate 370–histidine 374 and asparagine 424–aspartate 427. The segment at asparagine 424–aspartate 427 is G4. The segment at serine 460 to histidine 462 is G5.

This sequence belongs to the TRAFAC class translation factor GTPase superfamily. Classic translation factor GTPase family. IF-2 subfamily.

It is found in the cytoplasm. One of the essential components for the initiation of protein synthesis. Protects formylmethionyl-tRNA from spontaneous hydrolysis and promotes its binding to the 30S ribosomal subunits. Also involved in the hydrolysis of GTP during the formation of the 70S ribosomal complex. The chain is Translation initiation factor IF-2 from Vesicomyosocius okutanii subsp. Calyptogena okutanii (strain HA).